The sequence spans 315 residues: Methionyl-tRNA formyltransferase (315 aa).

113–116 (SILP) serves as a coordination point for (6S)-5,6,7,8-tetrahydrofolate.

This sequence belongs to the Fmt family.

It carries out the reaction L-methionyl-tRNA(fMet) + (6R)-10-formyltetrahydrofolate = N-formyl-L-methionyl-tRNA(fMet) + (6S)-5,6,7,8-tetrahydrofolate + H(+). Attaches a formyl group to the free amino group of methionyl-tRNA(fMet). The formyl group appears to play a dual role in the initiator identity of N-formylmethionyl-tRNA by promoting its recognition by IF2 and preventing the misappropriation of this tRNA by the elongation apparatus. In Vibrio vulnificus (strain YJ016), this protein is Methionyl-tRNA formyltransferase.